The sequence spans 678 residues: DNA mismatch repair protein MutL (678 aa).

The protein belongs to the DNA mismatch repair MutL/HexB family.

This protein is involved in the repair of mismatches in DNA. It is required for dam-dependent methyl-directed DNA mismatch repair. May act as a 'molecular matchmaker', a protein that promotes the formation of a stable complex between two or more DNA-binding proteins in an ATP-dependent manner without itself being part of a final effector complex. The sequence is that of DNA mismatch repair protein MutL from Lactiplantibacillus plantarum (strain ATCC BAA-793 / NCIMB 8826 / WCFS1) (Lactobacillus plantarum).